The sequence spans 309 residues: Pyridoxal 5'-phosphate synthase subunit PDX1.3 (309 aa).

Methionine 1 is subject to N-acetylmethionine. D-ribose 5-phosphate is bound at residue aspartate 40. Lysine 97 (schiff-base intermediate with D-ribose 5-phosphate) is an active-site residue. Residue glycine 169 participates in D-ribose 5-phosphate binding. Arginine 181 contributes to the D-glyceraldehyde 3-phosphate binding site. D-ribose 5-phosphate-binding positions include glycine 230 and 251-252 (GS).

Belongs to the PdxS/SNZ family. Homodimer or heterodimer with PDX1.1 or PDX1.2. Interacts with PDX2. Expressed in cotyledons, rapidly dividing root stele tissues, stems, leaves, flowers, mature pollen, and siliques.

Its subcellular location is the cytoplasm. The protein localises to the cell membrane. It is found in the membrane. It carries out the reaction aldehydo-D-ribose 5-phosphate + D-glyceraldehyde 3-phosphate + L-glutamine = pyridoxal 5'-phosphate + L-glutamate + phosphate + 3 H2O + H(+). It participates in cofactor biosynthesis; pyridoxal 5'-phosphate biosynthesis. Functionally, catalyzes the formation of pyridoxal 5'-phosphate from ribose 5-phosphate (RBP), glyceraldehyde 3-phosphate (G3P) and ammonia. The ammonia is provided by PDX2. Can also use ribulose 5-phosphate and dihydroxyacetone phosphate as substrates, resulting from enzyme-catalyzed isomerization of RBP and G3P, respectively. Also plays an indirect role in resistance to singlet oxygen-generating photosensitizers. The sequence is that of Pyridoxal 5'-phosphate synthase subunit PDX1.3 (PDX13) from Arabidopsis thaliana (Mouse-ear cress).